Reading from the N-terminus, the 470-residue chain is Negative regulator of sexual conjugation and meiosis (470 aa).

The Protein kinase domain maps to L18–V295. ATP-binding positions include I24–V32 and K47. The active-site Proton acceptor is the D143. Position 469 is a phosphoserine (S469).

This sequence belongs to the protein kinase superfamily. Ser/Thr protein kinase family.

The catalysed reaction is L-seryl-[protein] + ATP = O-phospho-L-seryl-[protein] + ADP + H(+). It catalyses the reaction L-threonyl-[protein] + ATP = O-phospho-L-threonyl-[protein] + ADP + H(+). Functionally, this protein is a negative regulator of both sexual conjugation and meiosis. It phosphorylates mei2. It blocks the onset of meiosis until conjugation takes place. This is Negative regulator of sexual conjugation and meiosis (ran1) from Schizosaccharomyces pombe (strain 972 / ATCC 24843) (Fission yeast).